A 492-amino-acid polypeptide reads, in one-letter code: ATP synthase subunit beta, chloroplastic (492 aa).

170-177 serves as a coordination point for ATP; that stretch reads GGAGVGKT.

This sequence belongs to the ATPase alpha/beta chains family. As to quaternary structure, F-type ATPases have 2 components, CF(1) - the catalytic core - and CF(0) - the membrane proton channel. CF(1) has five subunits: alpha(3), beta(3), gamma(1), delta(1), epsilon(1). CF(0) has four main subunits: a(1), b(1), b'(1) and c(9-12).

It is found in the plastid. It localises to the chloroplast thylakoid membrane. The enzyme catalyses ATP + H2O + 4 H(+)(in) = ADP + phosphate + 5 H(+)(out). In terms of biological role, produces ATP from ADP in the presence of a proton gradient across the membrane. The catalytic sites are hosted primarily by the beta subunits. The protein is ATP synthase subunit beta, chloroplastic of Marchantia polymorpha (Common liverwort).